We begin with the raw amino-acid sequence, 740 residues long: Ribulose bisphosphate carboxylase, chloroplastic (740 aa).

A chloroplast-targeting transit peptide spans Met-1 to Pro-55. A helical membrane pass occupies residues Ser-56 to Gly-76. Residue Asn-213 coordinates substrate. Residue Lys-268 is the Proton acceptor of the active site. Lys-270 contributes to the substrate binding site. 3 residues coordinate Mg(2+): Lys-293, Asp-295, and Glu-296. Lys-293 is subject to N6-carboxylysine. The Proton acceptor role is filled by His-389. The substrate site is built by Arg-390, His-423, and Ser-470.

This sequence belongs to the RuBisCO large chain family. Type II subfamily. As to quaternary structure, homodimer. Mg(2+) is required as a cofactor.

Its subcellular location is the plastid. The protein localises to the chloroplast membrane. The enzyme catalyses 2 (2R)-3-phosphoglycerate + 2 H(+) = D-ribulose 1,5-bisphosphate + CO2 + H2O. It catalyses the reaction D-ribulose 1,5-bisphosphate + O2 = 2-phosphoglycolate + (2R)-3-phosphoglycerate + 2 H(+). Its function is as follows. RuBisCO catalyzes two reactions: the carboxylation of D-ribulose 1,5-bisphosphate, the primary event in carbon dioxide fixation, as well as the oxidative fragmentation of the pentose substrate. Both reactions occur simultaneously and in competition at the same active site. The sequence is that of Ribulose bisphosphate carboxylase, chloroplastic (rbcL) from Heterocapsa triquetra (Dinoflagellate).